Reading from the N-terminus, the 304-residue chain is Phosphatidylinositol mannoside acyltransferase (304 aa).

The active-site Proton acceptor is the H126. H126 and R164 together coordinate hexadecanoyl-CoA. The active site involves E200. Residues S206 and E229 each contribute to the hexadecanoyl-CoA site.

It belongs to the LpxL/LpxM/LpxP family. Monomer.

It is found in the cell inner membrane. It catalyses the reaction a 2,6-O-bis(alpha-D-mannopyranosyl)-1-phosphatidyl-1D-myo-inositol + an acyl-CoA = a 2-O-(alpha-D-mannosyl)-6-O-(6-O-acyl-alpha-D-mannosyl)-1-phosphatidyl-1D-myo-inositol + CoA. The catalysed reaction is a 1,2-diacyl-sn-glycero-3-phospho-[alpha-D-mannopyranosyl-(1&lt;-&gt;6)-D-myo-inositol] + an acyl-CoA = a 1,2-diacyl-sn-glycero-3-phospho-[alpha-D-6-acyl-mannopyranosyl-(1&lt;-&gt;6)-D-myo-inositol] + CoA. It participates in phospholipid metabolism; phosphatidylinositol metabolism. Catalyzes the transfer of a palmitoyl moiety from palmitoyl-CoA to the 6-position of the mannose ring linked to the 2-position of myo-inositol in phosphatidyl-myo-inositol monomannoside (PIM1) or dimannoside (PIM2). This Mycolicibacterium smegmatis (strain ATCC 700084 / mc(2)155) (Mycobacterium smegmatis) protein is Phosphatidylinositol mannoside acyltransferase.